A 399-amino-acid polypeptide reads, in one-letter code: Acetate kinase (399 aa).

Residue N9 participates in Mg(2+) binding. K16 serves as a coordination point for ATP. Position 90 (R90) interacts with substrate. D147 acts as the Proton donor/acceptor in catalysis. ATP-binding positions include 207-211, 281-283, and 333-337; these read HLGNG, DFR, and GVGEN. Residue E387 coordinates Mg(2+).

The protein belongs to the acetokinase family. In terms of assembly, homodimer. Mg(2+) serves as cofactor. Requires Mn(2+) as cofactor.

It localises to the cytoplasm. It carries out the reaction acetate + ATP = acetyl phosphate + ADP. It functions in the pathway metabolic intermediate biosynthesis; acetyl-CoA biosynthesis; acetyl-CoA from acetate: step 1/2. Its function is as follows. Catalyzes the formation of acetyl phosphate from acetate and ATP. Can also catalyze the reverse reaction. In Mycobacterium sp. (strain JLS), this protein is Acetate kinase.